A 92-amino-acid chain; its full sequence is Large ribosomal subunit protein eL37 (92 aa).

Positions 19, 22, 34, and 37 each coordinate Zn(2+). A C4-type zinc finger spans residues 19 to 37 (CRRCGRSSYHIQKSKCAQC).

This sequence belongs to the eukaryotic ribosomal protein eL37 family. Requires Zn(2+) as cofactor.

In terms of biological role, binds to the 23S rRNA. This is Large ribosomal subunit protein eL37 (RpL37) from Spodoptera frugiperda (Fall armyworm).